We begin with the raw amino-acid sequence, 224 residues long: Small ribosomal subunit protein uS3 (224 aa).

The KH type-2 domain maps to 39-107; sequence IREFLKKKPS…DVWVEIAEVK (69 aa).

It belongs to the universal ribosomal protein uS3 family. In terms of assembly, part of the 30S ribosomal subunit. Forms a tight complex with proteins S10 and S14.

In terms of biological role, binds the lower part of the 30S subunit head. Binds mRNA in the 70S ribosome, positioning it for translation. This chain is Small ribosomal subunit protein uS3, found in Chlamydia trachomatis serovar D (strain ATCC VR-885 / DSM 19411 / UW-3/Cx).